The sequence spans 496 residues: Glycerol kinase (496 aa).

Position 12 (T12) interacts with ADP. ATP contacts are provided by T12, T13, and S14. T12 provides a ligand contact to sn-glycerol 3-phosphate. Residue R16 coordinates ADP. The sn-glycerol 3-phosphate site is built by R82, E83, and Y134. Glycerol is bound by residues R82, E83, and Y134. H230 is modified (phosphohistidine; by HPr). D244 lines the sn-glycerol 3-phosphate pocket. The glycerol site is built by D244 and Q245. Residues T266 and G309 each coordinate ADP. The ATP site is built by T266, G309, Q313, and G410. Residues G410 and N414 each contribute to the ADP site.

This sequence belongs to the FGGY kinase family. Post-translationally, the phosphoenolpyruvate-dependent sugar phosphotransferase system (PTS), including enzyme I, and histidine-containing protein (HPr) are required for the phosphorylation of, which leads to the activation of the enzyme.

The enzyme catalyses glycerol + ATP = sn-glycerol 3-phosphate + ADP + H(+). It functions in the pathway polyol metabolism; glycerol degradation via glycerol kinase pathway; sn-glycerol 3-phosphate from glycerol: step 1/1. Its activity is regulated as follows. Inhibited by fructose 1,6-bisphosphate and p-chloromercuribenzoate (PCMB). Key enzyme in the regulation of glycerol uptake and metabolism. Catalyzes the phosphorylation of glycerol to yield sn-glycerol 3-phosphate. The polypeptide is Glycerol kinase (Thermus thermophilus).